Consider the following 517-residue polypeptide: MSLGPELATKEQIREIAADYGLPMTDEEVADHIELLKGAIASYRELEHIPERKLPVKYPRTPGWRPTTQENPLNGWYWRCEIEGAKEGPLKGDRIAIKDVVCVAGVPMMNGSKLLEGYVPEIDATIVTRMLDAGATIVGKSACEDFSFSAGGMTCSTGPVGNPYDPTRNPGASSNGSAVLISTGQVDLAIGGDQGGSIRLPSAWCGVYGLKPTYGLVPYTGCAMIEGTLDHVGPMASSPKGIAKLLSVIAGYDADDPRQQGRIVPGFDTNYLPALERGVKGMKIAILKEGFGHDGSDGMLASDPLVDDCVRSAMETFRGLGAEVAEVSIPEHLTAWHIWTAIGLEGFTAFGVNGNGVGTNWNGWYNTSMAEYLARAMKSRPYDMPATVRSVLIRGEYFRRYYHNRYYGKAQNQRHLINEAYDRVLSEYDIIVCPTIPGLPTKMVDRDAGTLDTVVNQLNQLRNTAVCDLTGHPSMSVPCGLREGLPVGMMLTAKHFDDATLIAAAAAFEAAGDWRKM.

Catalysis depends on charge relay system residues lysine 98 and serine 173. The active-site Acyl-ester intermediate is the serine 197.

Belongs to the amidase family. As to quaternary structure, homooctamer.

The enzyme catalyses urethane + H2O + H(+) = ethanol + NH4(+) + CO2. With respect to regulation, exhibits poor salt tolerance but excellent tolerance to low concentrations of ethanol. EDTA has almost no impact on activity. Activity is increased in the presence of Ca(2+), Mg(2+) and Co(3+) and inhibited in the presence of Al(3+), Zn(2+) and Cu(2+). Functionally, hydrolase that can catalyze the degradation of ethyl carbamate (also called urethane), a probable human carcinogen widely found in alcoholic beverages. Can also use methyl carbamate, butyl carbamate, acetamide and urea. Also catalyzes the enantioselective hydrolysis of 2-phenylpropionamide, alpha-chlorophenylacetamide, 2-methyl-3-phenylpropionamide and alpha-methoxyphenylacetamide to the corresponding acids. Is inactive on benzamide and L-glutamine. The chain is Urethanase from Rhizobium radiobacter (Agrobacterium tumefaciens).